We begin with the raw amino-acid sequence, 551 residues long: Protein PLASTID TRANSCRIPTIONALLY ACTIVE 12, chloroplastic (551 aa).

Residues M1–S47 constitute a chloroplast transit peptide. Disordered regions lie at residues S76–S161 and H463–S529. Over residues R109–V119 the composition is skewed to low complexity. Acidic residues-rich tracts occupy residues E467–A476 and S485–D498. Positions R505–A516 are enriched in polar residues. Residues N518–S529 are compositionally biased toward basic and acidic residues.

Component of the plastid-encoded plastid RNA polymerase (PEP) complex.

The protein resides in the plastid. The protein localises to the chloroplast. Functionally, required for the activity of the plastid-encoded RNA polymerase (PEP) and full expression of genes transcribed by PEP. Required for the proper build-up and formation of the PEP-complex. Binds single-stranded (ss) DNA and RNA, but not double-stranded (ds) DNA. This Oryza sativa subsp. japonica (Rice) protein is Protein PLASTID TRANSCRIPTIONALLY ACTIVE 12, chloroplastic.